Reading from the N-terminus, the 204-residue chain is CASP-like protein 4B4 (204 aa).

Residues 1 to 60 (MSAAVAASSGAPAADVEKGAAAADANVDGGGAPAAAAASGEGVVSAVVRRWRRQDLLEKS) lie on the Cytoplasmic side of the membrane. Residues 61-81 (GSALRVAAWAFSLLAFVVMGA) traverse the membrane as a helical segment. Residues 82–98 (NDHGDWRQFEHYEEYRY) lie on the Extracellular side of the membrane. A helical transmembrane segment spans residues 99–119 (VVAIGVLAFIYTTLQLVRHGV). Residues 120 to 130 (RLTGGQDLQGK) lie on the Cytoplasmic side of the membrane. A helical membrane pass occupies residues 131–151 (VAVLVDFAGDQVTAYLLMSAV). The Extracellular portion of the chain corresponds to 152 to 175 (SAAIPITNRMREGADNVFTDSSAA). Residues 176-196 (SISMAFFAFLCLALSALVSGF) form a helical membrane-spanning segment. Residues 197 to 204 (KLAKQTYI) lie on the Cytoplasmic side of the membrane.

Belongs to the Casparian strip membrane proteins (CASP) family. Homodimer and heterodimers.

The protein localises to the cell membrane. The protein is CASP-like protein 4B4 of Oryza sativa subsp. japonica (Rice).